A 316-amino-acid chain; its full sequence is Large ribosomal subunit protein uL4 (316 aa).

The large ribosomal subunit protein uL4 stretch occupies residues 1–211; the sequence is MASCVVKNWQ…EQLKARWGSD (211 aa). Disordered stretches follow at residues 44–76 and 231–316; these read ARQG…ARAG and EDQA…ESDD. The segment covering 60-71 has biased composition (basic residues); that stretch reads GGRKPWKQKGTG. The unknown stretch occupies residues 212-316; it reads AAPAVLETPS…TAPAEEESDD (105 aa). A compositionally biased stretch (low complexity) spans 255–270; the sequence is QTPAQPEAQENQAALQ. Acidic residues-rich tracts occupy residues 281 to 291 and 301 to 316; these read EQTEEPQDPAE and TVEE…ESDD.

Belongs to the universal ribosomal protein uL4 family. Part of the 50S ribosomal subunit.

Functionally, one of the primary rRNA binding proteins, this protein initially binds near the 5'-end of the 23S rRNA. It is important during the early stages of 50S assembly. It makes multiple contacts with different domains of the 23S rRNA in the assembled 50S subunit and ribosome. Its function is as follows. Forms part of the polypeptide exit tunnel. The polypeptide is Large ribosomal subunit protein uL4 (Synechococcus sp. (strain JA-2-3B'a(2-13)) (Cyanobacteria bacterium Yellowstone B-Prime)).